A 34-amino-acid chain; its full sequence is Putative protein YmiB (34 aa).

Residues threonine 7–tryptophan 24 form a helical membrane-spanning segment.

The protein localises to the membrane. The protein is Putative protein YmiB (ymiB) of Escherichia coli (strain K12).